A 133-amino-acid chain; its full sequence is Small ribosomal subunit protein uS8 (133 aa).

Belongs to the universal ribosomal protein uS8 family. Part of the 30S ribosomal subunit. Contacts proteins S5 and S12.

In terms of biological role, one of the primary rRNA binding proteins, it binds directly to 16S rRNA central domain where it helps coordinate assembly of the platform of the 30S subunit. The protein is Small ribosomal subunit protein uS8 of Orientia tsutsugamushi (strain Boryong) (Rickettsia tsutsugamushi).